The following is a 455-amino-acid chain: Putative RNA polymerase II subunit B1 CTD phosphatase rpap-2 (455 aa).

The segment at 36-121 (EHLPHLHCLG…LDEHPLWITG (86 aa)) adopts an RTR1-type zinc-finger fold. Zn(2+)-binding residues include Cys59, Cys64, Cys97, and Cys101.

It belongs to the RPAP2 family.

The protein localises to the nucleus. It catalyses the reaction O-phospho-L-seryl-[protein] + H2O = L-seryl-[protein] + phosphate. It carries out the reaction O-phospho-L-threonyl-[protein] + H2O = L-threonyl-[protein] + phosphate. Putative RNA polymerase II subunit B1 C-terminal domain (CTD) phosphatase involved in RNA polymerase II transcription regulation. In Caenorhabditis elegans, this protein is Putative RNA polymerase II subunit B1 CTD phosphatase rpap-2.